We begin with the raw amino-acid sequence, 235 residues long: Phosphoribosylaminoimidazole-succinocarboxamide synthase (235 aa).

It belongs to the SAICAR synthetase family.

It carries out the reaction 5-amino-1-(5-phospho-D-ribosyl)imidazole-4-carboxylate + L-aspartate + ATP = (2S)-2-[5-amino-1-(5-phospho-beta-D-ribosyl)imidazole-4-carboxamido]succinate + ADP + phosphate + 2 H(+). It functions in the pathway purine metabolism; IMP biosynthesis via de novo pathway; 5-amino-1-(5-phospho-D-ribosyl)imidazole-4-carboxamide from 5-amino-1-(5-phospho-D-ribosyl)imidazole-4-carboxylate: step 1/2. In Sulfolobus acidocaldarius (strain ATCC 33909 / DSM 639 / JCM 8929 / NBRC 15157 / NCIMB 11770), this protein is Phosphoribosylaminoimidazole-succinocarboxamide synthase.